A 285-amino-acid chain; its full sequence is Catechol-2,3-dioxygenase (285 aa).

VOC domains follow at residues 9 to 126 (HIGY…MYAD) and 169 to 285 (IIGH…TFVI). H213 and E264 together coordinate Fe cation.

This sequence belongs to the extradiol ring-cleavage dioxygenase family. The cofactor is Fe(2+).

It catalyses the reaction catechol + O2 = (2Z,4E)-2-hydroxy-6-oxohexa-2,4-dienoate + H(+). Involved in the meta cleavage of catechol to 2-hydroxymuconic semialdehyde. Essential for growth and viability in the presence of catechol and probably involved in the detoxification of catechol. This is Catechol-2,3-dioxygenase (catE) from Bacillus subtilis (strain 168).